The chain runs to 170 residues: Arginine repressor (170 aa).

The protein belongs to the ArgR family.

The protein resides in the cytoplasm. It functions in the pathway amino-acid biosynthesis; L-arginine biosynthesis [regulation]. In terms of biological role, regulates arginine biosynthesis genes. The protein is Arginine repressor of Mycobacterium tuberculosis (strain ATCC 25177 / H37Ra).